We begin with the raw amino-acid sequence, 548 residues long: Dihydroxy-acid dehydratase (548 aa).

Residue aspartate 78 coordinates Mg(2+). Cysteine 119 provides a ligand contact to [2Fe-2S] cluster. Aspartate 120 and lysine 121 together coordinate Mg(2+). N6-carboxylysine is present on lysine 121. Cysteine 185 provides a ligand contact to [2Fe-2S] cluster. Glutamate 438 contributes to the Mg(2+) binding site. The Proton acceptor role is filled by serine 464.

This sequence belongs to the IlvD/Edd family. In terms of assembly, homodimer. [2Fe-2S] cluster serves as cofactor. The cofactor is Mg(2+).

The enzyme catalyses (2R)-2,3-dihydroxy-3-methylbutanoate = 3-methyl-2-oxobutanoate + H2O. It catalyses the reaction (2R,3R)-2,3-dihydroxy-3-methylpentanoate = (S)-3-methyl-2-oxopentanoate + H2O. It participates in amino-acid biosynthesis; L-isoleucine biosynthesis; L-isoleucine from 2-oxobutanoate: step 3/4. Its pathway is amino-acid biosynthesis; L-valine biosynthesis; L-valine from pyruvate: step 3/4. In terms of biological role, functions in the biosynthesis of branched-chain amino acids. Catalyzes the dehydration of (2R,3R)-2,3-dihydroxy-3-methylpentanoate (2,3-dihydroxy-3-methylvalerate) into 2-oxo-3-methylpentanoate (2-oxo-3-methylvalerate) and of (2R)-2,3-dihydroxy-3-methylbutanoate (2,3-dihydroxyisovalerate) into 2-oxo-3-methylbutanoate (2-oxoisovalerate), the penultimate precursor to L-isoleucine and L-valine, respectively. The protein is Dihydroxy-acid dehydratase of Methanothrix thermoacetophila (strain DSM 6194 / JCM 14653 / NBRC 101360 / PT) (Methanosaeta thermophila).